The primary structure comprises 345 residues: Probable galacturonosyltransferase-like 3 (345 aa).

At 1–7 (MSSLRLR) the chain is on the cytoplasmic side. The chain crosses the membrane as a helical; Signal-anchor for type II membrane protein span at residues 8-28 (LCLLLLLPITISCVTVTLTDL). Over 29-345 (PAFREAPAFR…FRYSPLISDS (317 aa)) the chain is Lumenal. A glycan (N-linked (GlcNAc...) asparagine) is linked at Asn197.

Belongs to the glycosyltransferase 8 family.

The protein localises to the golgi apparatus membrane. It functions in the pathway glycan metabolism; pectin biosynthesis. In terms of biological role, may be involved in pectin and/or xylans biosynthesis in cell walls. In Arabidopsis thaliana (Mouse-ear cress), this protein is Probable galacturonosyltransferase-like 3 (GATL3).